The primary structure comprises 106 residues: Tubulin-specific chaperone A (106 aa).

The residue at position 94 (S94) is a Phosphoserine.

The protein belongs to the TBCA family.

It is found in the cytoplasm. It localises to the cytoskeleton. In terms of biological role, tubulin-folding protein; involved in the early step of the tubulin folding pathway. This Saccharomyces cerevisiae (strain ATCC 204508 / S288c) (Baker's yeast) protein is Tubulin-specific chaperone A (RBL2).